Reading from the N-terminus, the 500-residue chain is Aromatic-L-amino-acid decarboxylase (500 aa).

An L-tryptophan-binding site is contributed by proline 102. Serine 168 contacts pyridoxal 5'-phosphate. Histidine 203 serves as a coordination point for L-tryptophan. Threonine 262 is a binding site for pyridoxal 5'-phosphate. An L-tryptophan-binding site is contributed by histidine 318. An N6-(pyridoxal phosphate)lysine modification is found at lysine 319. Tyrosine 348 is an L-tryptophan binding site.

It belongs to the group II decarboxylase family. Homodimer. Pyridoxal 5'-phosphate serves as cofactor.

The catalysed reaction is L-tryptophan + H(+) = tryptamine + CO2. It carries out the reaction 5-hydroxy-L-tryptophan + H(+) = serotonin + CO2. Catalyzes the decarboxylation of L-tryptophan to tryptamine and L-5-hydroxytryptophan to serotonin, respectively. In Catharanthus roseus (Madagascar periwinkle), this protein is Aromatic-L-amino-acid decarboxylase.